A 124-amino-acid polypeptide reads, in one-letter code: Small ribosomal subunit protein uS12 (124 aa).

D90 bears the 3-methylthioaspartic acid mark.

Belongs to the universal ribosomal protein uS12 family. In terms of assembly, part of the 30S ribosomal subunit. Contacts proteins S8 and S17. May interact with IF1 in the 30S initiation complex.

Its function is as follows. With S4 and S5 plays an important role in translational accuracy. Functionally, interacts with and stabilizes bases of the 16S rRNA that are involved in tRNA selection in the A site and with the mRNA backbone. Located at the interface of the 30S and 50S subunits, it traverses the body of the 30S subunit contacting proteins on the other side and probably holding the rRNA structure together. The combined cluster of proteins S8, S12 and S17 appears to hold together the shoulder and platform of the 30S subunit. The protein is Small ribosomal subunit protein uS12 of Wolbachia sp. subsp. Drosophila simulans (strain wRi).